Reading from the N-terminus, the 199-residue chain is Nucleoside triphosphate pyrophosphatase (199 aa).

Residue D76 is the Proton acceptor of the active site.

It belongs to the Maf family. A divalent metal cation serves as cofactor.

Its subcellular location is the cytoplasm. It carries out the reaction a ribonucleoside 5'-triphosphate + H2O = a ribonucleoside 5'-phosphate + diphosphate + H(+). It catalyses the reaction a 2'-deoxyribonucleoside 5'-triphosphate + H2O = a 2'-deoxyribonucleoside 5'-phosphate + diphosphate + H(+). Functionally, nucleoside triphosphate pyrophosphatase. May have a dual role in cell division arrest and in preventing the incorporation of modified nucleotides into cellular nucleic acids. The sequence is that of Nucleoside triphosphate pyrophosphatase from Ruegeria pomeroyi (strain ATCC 700808 / DSM 15171 / DSS-3) (Silicibacter pomeroyi).